A 51-amino-acid chain; its full sequence is Ribosome biogenesis protein Nop10 (51 aa).

This sequence belongs to the NOP10 family.

Functionally, involved in ribosome biogenesis; more specifically in 18S rRNA pseudouridylation and in cleavage of pre-rRNA. The polypeptide is Ribosome biogenesis protein Nop10 (Methanococcus maripaludis (strain C7 / ATCC BAA-1331)).